The following is a 210-amino-acid chain: uncharacterized protein (210 aa).

4 helical membrane-spanning segments follow: residues 5 to 25 (LAYIPIAAMMVIIPGADTMLV), 50 to 70 (FWTVIAILGLSVVIAKSVILF), 75 to 95 (YLGAAYLIYLGVKSFFAKSMF), and 155 to 175 (IILASILTLLAVLWFLFLVYI).

It belongs to the Rht family.

It is found in the cell membrane. This is an uncharacterized protein from Bacillus subtilis (strain 168).